A 280-amino-acid chain; its full sequence is Secreted RxLR effector protein 39 (280 aa).

An N-terminal signal peptide occupies residues 1-19 (MRGAYYVAIALLIVASCSA). The RxLR-dEER signature appears at 49 to 70 (RVLRGSRDLKNKWAVHAGGEDR). The disordered stretch occupies residues 229–249 (EVKARSSKRQRTNPMLNNMDG).

The protein belongs to the RxLR effector family.

The protein resides in the secreted. It is found in the host nucleus. In terms of biological role, secreted effector that completely suppresses the host cell death induced by cell death-inducing proteins. The protein is Secreted RxLR effector protein 39 of Plasmopara viticola (Downy mildew of grapevine).